Consider the following 155-residue polypeptide: Small ribosomal subunit protein uS7 (155 aa).

Belongs to the universal ribosomal protein uS7 family. Part of the 30S ribosomal subunit. Contacts proteins S9 and S11.

One of the primary rRNA binding proteins, it binds directly to 16S rRNA where it nucleates assembly of the head domain of the 30S subunit. Is located at the subunit interface close to the decoding center, probably blocks exit of the E-site tRNA. The sequence is that of Small ribosomal subunit protein uS7 from Cytophaga hutchinsonii (strain ATCC 33406 / DSM 1761 / CIP 103989 / NBRC 15051 / NCIMB 9469 / D465).